Consider the following 418-residue polypeptide: NADH-quinone oxidoreductase subunit D (418 aa).

This sequence belongs to the complex I 49 kDa subunit family. As to quaternary structure, NDH-1 is composed of 14 different subunits. Subunits NuoB, C, D, E, F, and G constitute the peripheral sector of the complex.

Its subcellular location is the cell inner membrane. It carries out the reaction a quinone + NADH + 5 H(+)(in) = a quinol + NAD(+) + 4 H(+)(out). Functionally, NDH-1 shuttles electrons from NADH, via FMN and iron-sulfur (Fe-S) centers, to quinones in the respiratory chain. The immediate electron acceptor for the enzyme in this species is believed to be ubiquinone. Couples the redox reaction to proton translocation (for every two electrons transferred, four hydrogen ions are translocated across the cytoplasmic membrane), and thus conserves the redox energy in a proton gradient. In Neisseria meningitidis serogroup C (strain 053442), this protein is NADH-quinone oxidoreductase subunit D.